Here is a 300-residue protein sequence, read N- to C-terminus: MTEENSLRCGYVAIVGRPNVGKSTLLNHILGQKLAITSRKPQTTRHNMLGIKTEGDVQAIYVDTPGLHKQNDKALNRYMNKTASAALKDVDVVIFVVDRMRWTEEDQLVLDRLQYVQGPVLVAVNKADRLEDKVELLPHLQWLAQQLPNAEIVPISALHGHNLDTLERLVAGRLPQGEHFFPEDQITDRSSRFLAAELVREKIMRQLGAELPYQVTVEIEDFKQQGQVLHIHALILVEREGQKKIIIGEKGERIKRIGQEARQGMEVLFDSKVMLNLWVKVKGGWSDDERALHSLGYRDS.

One can recognise an Era-type G domain in the interval 8-176 (RCGYVAIVGR…ERLVAGRLPQ (169 aa)). Positions 16 to 23 (GRPNVGKS) are G1. 16–23 (GRPNVGKS) contacts GTP. Positions 42 to 46 (QTTRH) are G2. The G3 stretch occupies residues 63 to 66 (DTPG). GTP-binding positions include 63–67 (DTPGL) and 125–128 (NKAD). The segment at 125–128 (NKAD) is G4. The interval 155-157 (ISA) is G5. The KH type-2 domain maps to 199 to 283 (VREKIMRQLG…MLNLWVKVKG (85 aa)).

Belongs to the TRAFAC class TrmE-Era-EngA-EngB-Septin-like GTPase superfamily. Era GTPase family. As to quaternary structure, monomer.

The protein localises to the cytoplasm. It is found in the cell inner membrane. Its function is as follows. An essential GTPase that binds both GDP and GTP, with rapid nucleotide exchange. Plays a role in 16S rRNA processing and 30S ribosomal subunit biogenesis and possibly also in cell cycle regulation and energy metabolism. The chain is GTPase Era from Azotobacter vinelandii (strain DJ / ATCC BAA-1303).